The chain runs to 928 residues: Isoleucine--tRNA ligase (928 aa).

The 'HIGH' region signature appears at 57-67; the sequence is PFANGNIHMGH. Position 554 (Glu-554) interacts with L-isoleucyl-5'-AMP. Residues 595–599 carry the 'KMSKS' region motif; the sequence is KMSKS. Residue Lys-598 coordinates ATP. Residues Cys-887, Cys-890, Cys-907, and Cys-910 each contribute to the Zn(2+) site.

The protein belongs to the class-I aminoacyl-tRNA synthetase family. IleS type 1 subfamily. As to quaternary structure, monomer. Zn(2+) is required as a cofactor.

The protein localises to the cytoplasm. The catalysed reaction is tRNA(Ile) + L-isoleucine + ATP = L-isoleucyl-tRNA(Ile) + AMP + diphosphate. In terms of biological role, catalyzes the attachment of isoleucine to tRNA(Ile). As IleRS can inadvertently accommodate and process structurally similar amino acids such as valine, to avoid such errors it has two additional distinct tRNA(Ile)-dependent editing activities. One activity is designated as 'pretransfer' editing and involves the hydrolysis of activated Val-AMP. The other activity is designated 'posttransfer' editing and involves deacylation of mischarged Val-tRNA(Ile). In Lactobacillus johnsonii (strain CNCM I-12250 / La1 / NCC 533), this protein is Isoleucine--tRNA ligase.